We begin with the raw amino-acid sequence, 166 residues long: Transcription factor HES-5 (166 aa).

A bHLH domain is found at 16–72; it reads KNRLRKPVVEKMRRDRINSSIEQLKLLLEQEFARHQPNSKLEKADILEMAVSYLKHS. The Orange domain maps to 88–119; the sequence is YSEGYSWCLQEAVQFLTLHAASDTQMKLLYHF. Residues 125–166 are disordered; it reads PAAPVKETPTPGAAPQPARSSTKAAASVSTSRQSACGLWRPW. The segment covering 142–156 has biased composition (low complexity); it reads ARSSTKAAASVSTSR. The WRPW motif motif lies at 163-166; it reads WRPW.

As to quaternary structure, transcription repression requires formation of a complex with a corepressor protein of the Groucho/TLE family. In terms of tissue distribution, expressed predominantly in embryonic neural lineage cells.

Its subcellular location is the nucleus. Functionally, transcriptional repressor of genes that require a bHLH protein for their transcription. Plays an important role as neurogenesis negative regulator. This is Transcription factor HES-5 (Hes5) from Rattus norvegicus (Rat).